A 407-amino-acid polypeptide reads, in one-letter code: MIQVLLVTLCLAAFPYQGSSIILESGNVNDYEVVYPRKVTPVPKGAVQPKYEDAMQYELKVNGEPVVLHLERNKGLFSKDYSETHYSPDGRKITTYPPVEDHCYYHGRIQNDADSIASISACNGLKGHFKLQGEMYLIEPLELSDSEAHAVFKYENVEKEDEAPKICGVTQNWESYEPIKKASQLNLNYQYQRYVELVTVVDHGMYTKYNGDSDKIRQWVHQMVNTMKESYRYMYIDISLAGVEIWSNKDLIDVQPAARHTLDSFGEWRERDLLHRISHDNAQLLTSTDFDGPTIGLAYVGTMCDPKLSTGVVEDHSKINFLVAVTMAHEMGHNLGMRHDTGSCSCGGYSCIMSPVISDDSPKYFSNCSYIQCWDFIMKENPQCILNKPLRTDTVSTPVSGDELLEA.

A signal peptide spans 1 to 20 (MIQVLLVTLCLAAFPYQGSS). The propeptide occupies 21 to 187 (IILESGNVND…PIKKASQLNL (167 aa)). One can recognise a Peptidase M12B domain in the interval 193 to 389 (RYVELVTVVD…ENPQCILNKP (197 aa)). Positions 196 and 280 each coordinate Ca(2+). 3 disulfide bridges follow: C304-C384, C344-C368, and C346-C351. Position 329 (H329) interacts with Zn(2+). E330 is an active-site residue. H333 and H339 together coordinate Zn(2+). Residue N367 is glycosylated (N-linked (GlcNAc...) asparagine). Ca(2+) contacts are provided by C384 and N387.

The protein belongs to the venom metalloproteinase (M12B) family. P-I subfamily. As to quaternary structure, monomer. Zn(2+) serves as cofactor. Contains sialic acid terminally alpha(2-6)-linked to galactose in a complex N-glycan chain. In terms of tissue distribution, expressed by the venom gland.

Its subcellular location is the secreted. In terms of biological role, this zinc hemorrhagic metalloproteinase has fibrino(geno)lytic activities. It causes hemorrhage and has myonecrotic activity on both fiber types I and II. The recombinant enzyme, without post-translational modifications, also has proteolytic activity, but does not show any hemorrhagic activity. The polypeptide is Snake venom metalloproteinase ACLH (Agkistrodon contortrix laticinctus (Broad-banded copperhead)).